Reading from the N-terminus, the 343-residue chain is Probable dolichyl-diphosphooligosaccharide--protein glycosyltransferase subunit 3A (343 aa).

An N-terminal signal peptide occupies residues 1 to 22 (MVIQTNLSYRFFILIVFLFTLA). At 23 to 185 (NPKSDSDLKN…TVCSIQRPPL (163 aa)) the chain is on the lumenal side. Asn-105, Asn-108, and Asn-146 each carry an N-linked (GlcNAc...) asparagine glycan. A helical membrane pass occupies residues 186–206 (ISKTQIGIIVAIIIISTPILI). Topologically, residues 207–220 (KKILKGETLLHDHR) are cytoplasmic. A helical transmembrane segment spans residues 221–241 (IWLVGAVFVYFFSVSGTMHNI). Residues 242-273 (IREMPMYIKDYEDSSKFVFFIEESEMQLGAEG) are Lumenal-facing. Residues 274–294 (FFVGFLYTVVGLLLAFVTNVV) traverse the membrane as a helical segment. The Cytoplasmic segment spans residues 295–304 (VRVKKLDEQR). The chain crosses the membrane as a helical span at residues 305 to 325 (MAMLLALSISFWAVRKVVYLD). Residues 326–343 (NWKTGYEIYPYWPSSWRG) lie on the Lumenal side of the membrane.

This sequence belongs to the OST3/OST6 family. In terms of assembly, component of the oligosaccharyltransferase (OST) complex.

The protein localises to the endoplasmic reticulum membrane. Functionally, subunit of the oligosaccharyl transferase (OST) complex that catalyzes the initial transfer of a defined glycan (Glc(3)Man(9)GlcNAc(2) in eukaryotes) from the lipid carrier dolichol-pyrophosphate to an asparagine residue within an Asn-X-Ser/Thr consensus motif in nascent polypeptide chains, the first step in protein N-glycosylation. N-glycosylation occurs cotranslationally and the complex associates with the Sec61 complex at the channel-forming translocon complex that mediates protein translocation across the endoplasmic reticulum (ER). All subunits are required for a maximal enzyme activity. The sequence is that of Probable dolichyl-diphosphooligosaccharide--protein glycosyltransferase subunit 3A (OST3A) from Arabidopsis thaliana (Mouse-ear cress).